A 169-amino-acid chain; its full sequence is TPD1 protein homolog 1B (169 aa).

A signal peptide spans 1 to 25; sequence MADCTTMRLASSVTIILLLLVASQA.

As to expression, expressed in roots, and at low levels in anthers during meiosis.

In terms of biological role, may play a role during anther development. The sequence is that of TPD1 protein homolog 1B from Oryza sativa subsp. japonica (Rice).